A 308-amino-acid polypeptide reads, in one-letter code: Peptidyl-prolyl cis-trans isomerase CYP8 (308 aa).

Positions 56–215 (FTDPESSEEA…QPITIGYISS (160 aa)) constitute a PPIase cyclophilin-type domain.

The enzyme catalyses [protein]-peptidylproline (omega=180) = [protein]-peptidylproline (omega=0). Functionally, PPIases accelerate the folding of proteins. It catalyzes the cis-trans isomerization of proline imidic peptide bonds in oligopeptides. In Saccharomyces cerevisiae (strain ATCC 204508 / S288c) (Baker's yeast), this protein is Peptidyl-prolyl cis-trans isomerase CYP8 (CPR8).